An 84-amino-acid polypeptide reads, in one-letter code: Large ribosomal subunit protein bL31B (84 aa).

The protein belongs to the bacterial ribosomal protein bL31 family. Type B subfamily. As to quaternary structure, part of the 50S ribosomal subunit.

Binds the 23S rRNA. The chain is Large ribosomal subunit protein bL31B from Rhodococcus jostii (strain RHA1).